A 145-amino-acid polypeptide reads, in one-letter code: 3-dehydroquinate dehydratase (145 aa).

Catalysis depends on Tyr-23, which acts as the Proton acceptor. Substrate-binding residues include Asn-74, His-80, and Asp-87. His-100 serves as the catalytic Proton donor. Substrate contacts are provided by residues 101 to 102 (LS) and Arg-111.

Belongs to the type-II 3-dehydroquinase family. In terms of assembly, homododecamer.

It carries out the reaction 3-dehydroquinate = 3-dehydroshikimate + H2O. It participates in metabolic intermediate biosynthesis; chorismate biosynthesis; chorismate from D-erythrose 4-phosphate and phosphoenolpyruvate: step 3/7. Functionally, catalyzes a trans-dehydration via an enolate intermediate. The polypeptide is 3-dehydroquinate dehydratase (Bacillus licheniformis (strain ATCC 14580 / DSM 13 / JCM 2505 / CCUG 7422 / NBRC 12200 / NCIMB 9375 / NCTC 10341 / NRRL NRS-1264 / Gibson 46)).